The following is a 413-amino-acid chain: Multifunctional CCA protein (413 aa).

The ATP site is built by Gly-8 and Arg-11. The CTP site is built by Gly-8 and Arg-11. Mg(2+) contacts are provided by Asp-21 and Asp-23. The ATP site is built by Arg-91, Arg-137, and Arg-140. 3 residues coordinate CTP: Arg-91, Arg-137, and Arg-140. In terms of domain architecture, HD spans 228-329 (TGVHTLMTLS…VKLFDAIDAW (102 aa)).

The protein belongs to the tRNA nucleotidyltransferase/poly(A) polymerase family. Bacterial CCA-adding enzyme type 1 subfamily. Monomer. Can also form homodimers and oligomers. Mg(2+) serves as cofactor. The cofactor is Ni(2+).

The catalysed reaction is a tRNA precursor + 2 CTP + ATP = a tRNA with a 3' CCA end + 3 diphosphate. It catalyses the reaction a tRNA with a 3' CCA end + 2 CTP + ATP = a tRNA with a 3' CCACCA end + 3 diphosphate. In terms of biological role, catalyzes the addition and repair of the essential 3'-terminal CCA sequence in tRNAs without using a nucleic acid template. Adds these three nucleotides in the order of C, C, and A to the tRNA nucleotide-73, using CTP and ATP as substrates and producing inorganic pyrophosphate. tRNA 3'-terminal CCA addition is required both for tRNA processing and repair. Also involved in tRNA surveillance by mediating tandem CCA addition to generate a CCACCA at the 3' terminus of unstable tRNAs. While stable tRNAs receive only 3'-terminal CCA, unstable tRNAs are marked with CCACCA and rapidly degraded. This Salmonella choleraesuis (strain SC-B67) protein is Multifunctional CCA protein.